The primary structure comprises 306 residues: Ribosomal RNA small subunit methyltransferase H (306 aa).

Residues G33 to Y35, D51, F78, D96, and Q103 contribute to the S-adenosyl-L-methionine site.

The protein belongs to the methyltransferase superfamily. RsmH family.

It localises to the cytoplasm. It catalyses the reaction cytidine(1402) in 16S rRNA + S-adenosyl-L-methionine = N(4)-methylcytidine(1402) in 16S rRNA + S-adenosyl-L-homocysteine + H(+). Its function is as follows. Specifically methylates the N4 position of cytidine in position 1402 (C1402) of 16S rRNA. The sequence is that of Ribosomal RNA small subunit methyltransferase H from Rickettsia typhi (strain ATCC VR-144 / Wilmington).